Here is a 423-residue protein sequence, read N- to C-terminus: Acaloleptin A (423 aa).

Residues 1-17 (MITKISLILFAVLLVSG) form the signal peptide. A propeptide spanning residues 18–26 (LEEEERWKR) is cleaved from the precursor. Disordered regions lie at residues 28–58 (LQPG…NTKT), 108–128 (INNK…DNGN), 180–203 (NVNN…GNTR), and 355–385 (SDDE…TRAD). Residues 34-43 (NVNNNDQPWQ) are compositionally biased toward polar residues. The span at 180 to 189 (NVNNKDQPWQ) shows a compositional bias: polar residues. Over residues 357 to 366 (DEDEEEEEDQ) the composition is skewed to acidic residues. Positions 376–385 (RGDDGNTRAD) are enriched in basic and acidic residues.

This sequence belongs to the coleoptericin family. As to expression, hemolymph (at protein level). Larval fat body.

Its subcellular location is the secreted. Functionally, acaloleptins A1-A4 show antibacterial activity against Gram-negative bacteria but not against Gram-positive bacteria. Acaloleptin A5 shows antibacterial activity against Gram-positive bacteria but not against Gram-negative bacteria, and may also have antifungal activity. The chain is Acaloleptin A from Acalolepta luxuriosa (Udo longhorn beetle).